The sequence spans 451 residues: Phosphoglucosamine mutase (451 aa).

The Phosphoserine intermediate role is filled by serine 102. Mg(2+)-binding residues include serine 102, aspartate 242, aspartate 244, and aspartate 246. Position 102 is a phosphoserine (serine 102).

Belongs to the phosphohexose mutase family. Mg(2+) serves as cofactor. Post-translationally, activated by phosphorylation.

The catalysed reaction is alpha-D-glucosamine 1-phosphate = D-glucosamine 6-phosphate. Functionally, catalyzes the conversion of glucosamine-6-phosphate to glucosamine-1-phosphate. This Staphylococcus epidermidis (strain ATCC 35984 / DSM 28319 / BCRC 17069 / CCUG 31568 / BM 3577 / RP62A) protein is Phosphoglucosamine mutase.